The following is a 329-amino-acid chain: Vitamin B12 import system permease protein BtuC (329 aa).

9 helical membrane-spanning segments follow: residues 18 to 38, 64 to 84, 91 to 111, 115 to 135, 149 to 169, 191 to 208, 243 to 263, 277 to 297, and 305 to 325; these read WLLS…CAGE, LAVL…QALF, PGLL…VLLG, LPGW…TLIL, LLAG…AIYF, WQQS…IWIC, GWMV…GLVI, VLLP…DVVA, and ELPI…WLLL.

Belongs to the binding-protein-dependent transport system permease family. FecCD subfamily. As to quaternary structure, the complex is composed of two ATP-binding proteins (BtuD), two transmembrane proteins (BtuC) and a solute-binding protein (BtuF).

It localises to the cell inner membrane. Its function is as follows. Part of the ABC transporter complex BtuCDF involved in vitamin B12 import. Involved in the translocation of the substrate across the membrane. In Salmonella arizonae (strain ATCC BAA-731 / CDC346-86 / RSK2980), this protein is Vitamin B12 import system permease protein BtuC.